We begin with the raw amino-acid sequence, 401 residues long: Calreticulin (401 aa).

The signal sequence occupies residues 1 to 18 (MRKELWLGLLLSSQAVLS). C103 and C134 are joined by a disulfide. The an alpha-D-glucoside site is built by Y107, K109, Y125, and D132. A run of 7 repeats spans residues 187 to 198 (KESGTLEEDWEI), 206 to 217 (DPEDKKPADWVD), 223 to 234 (DPEDKKPEDWDK), 241 to 252 (DPDATQPDDWDE), 256 to 266 (GKWEAPMISNP), 270 to 280 (GEWKAKKIPNP), and 284 to 294 (GVWKPRDIPNP). Positions 187–252 (KESGTLEEDW…DATQPDDWDE (66 aa)) are 4 X approximate repeats. Composition is skewed to basic and acidic residues over residues 199–214 (LKPK…KPAD) and 224–236 (PEDK…DKEP). The tract at residues 199 to 263 (LKPKTIPDPE…EDGKWEAPMI (65 aa)) is disordered. Positions 246–256 (QPDDWDEEEDG) are enriched in acidic residues. The 3 X approximate repeats stretch occupies residues 256–294 (GKWEAPMISNPKYKGEWKAKKIPNPAYKGVWKPRDIPNP). D314 is an an alpha-D-glucoside binding site. The tract at residues 341 to 401 (DQTNGATKDA…EEEDDKKDEL (61 aa)) is disordered. Positions 348–381 (KDAEKKAFDSAEADKRKKEEDERKKQEEEEKKTA) are enriched in basic and acidic residues. Residues 382–401 (EEDEDDDDEEEEEDDKKDEL) are compositionally biased toward acidic residues. Positions 398-401 (KDEL) match the Prevents secretion from ER motif.

Belongs to the calreticulin family.

The protein resides in the endoplasmic reticulum lumen. Functionally, molecular calcium-binding chaperone promoting folding, oligomeric assembly and quality control in the ER via the calreticulin/calnexin cycle. This lectin may interact transiently with almost all of the monoglucosylated glycoproteins that are synthesized in the ER. This Euglena gracilis protein is Calreticulin.